Consider the following 198-residue polypeptide: Neutrophil gelatinase-associated lipocalin (198 aa).

An N-terminal signal peptide occupies residues 1–20; that stretch reads MPLGLLWLGLALLGALHAQA. Residue Gln21 is modified to Pyrrolidone carboxylic acid. 72-74 is an a carboxymycobactin binding site; that stretch reads YAT. Asn85 carries an N-linked (GlcNAc...) asparagine glycan. Cys96 and Cys195 are oxidised to a cystine. Tyr126 contributes to the enterobactin binding site. A carboxymycobactin contacts are provided by Lys145, Lys154, and Tyr158. Residue Lys154 participates in enterobactin binding.

This sequence belongs to the calycin superfamily. Lipocalin family. As to quaternary structure, monomer. Homodimer; disulfide-linked. Heterodimer; disulfide-linked with MMP9. Detected in neutrophils (at protein level). Expressed in bone marrow and in tissues that are prone to exposure to microorganism. High expression is found in bone marrow as well as in uterus, prostate, salivary gland, stomach, appendix, colon, trachea and lung. Expressed in the medullary tubules of the kidney. Not found in the small intestine or peripheral blood leukocytes.

The protein localises to the secreted. Its subcellular location is the cytoplasmic granule lumen. The protein resides in the cytoplasmic vesicle lumen. Its function is as follows. Iron-trafficking protein involved in multiple processes such as apoptosis, innate immunity and renal development. Binds iron through association with 2,3-dihydroxybenzoic acid (2,3-DHBA), a siderophore that shares structural similarities with bacterial enterobactin, and delivers or removes iron from the cell, depending on the context. Iron-bound form (holo-24p3) is internalized following binding to the SLC22A17 (24p3R) receptor, leading to release of iron and subsequent increase of intracellular iron concentration. In contrast, association of the iron-free form (apo-24p3) with the SLC22A17 (24p3R) receptor is followed by association with an intracellular siderophore, iron chelation and iron transfer to the extracellular medium, thereby reducing intracellular iron concentration. Involved in apoptosis due to interleukin-3 (IL3) deprivation: iron-loaded form increases intracellular iron concentration without promoting apoptosis, while iron-free form decreases intracellular iron levels, inducing expression of the proapoptotic protein BCL2L11/BIM, resulting in apoptosis. Involved in innate immunity; limits bacterial proliferation by sequestering iron bound to microbial siderophores, such as enterobactin. Can also bind siderophores from M.tuberculosis. This chain is Neutrophil gelatinase-associated lipocalin (LCN2), found in Homo sapiens (Human).